The chain runs to 446 residues: Tol-Pal system protein TolB (446 aa).

The first 19 residues, 1–19 (MLLRYLFILFIIIPIKAFA), serve as a signal peptide directing secretion.

Belongs to the TolB family. As to quaternary structure, the Tol-Pal system is composed of five core proteins: the inner membrane proteins TolA, TolQ and TolR, the periplasmic protein TolB and the outer membrane protein Pal. They form a network linking the inner and outer membranes and the peptidoglycan layer.

It localises to the periplasm. Part of the Tol-Pal system, which plays a role in outer membrane invagination during cell division and is important for maintaining outer membrane integrity. This Pelagibacter ubique (strain HTCC1062) protein is Tol-Pal system protein TolB.